We begin with the raw amino-acid sequence, 196 residues long: tRNA(Phe) 7-((3-amino-3-carboxypropyl)-4-demethylwyosine(37)-N(4))-methyltransferase 1 (196 aa).

Belongs to the TYW3 family.

The enzyme catalyses 4-demethyl-7-[(3S)-3-amino-3-carboxypropyl]wyosine(37) in tRNA(Phe) + S-adenosyl-L-methionine = 7-[(3S)-3-amino-3-carboxypropyl]wyosine(37) in tRNA(Phe) + S-adenosyl-L-homocysteine + H(+). Its function is as follows. S-adenosyl-L-methionine-dependent methyltransferase that acts as a component of the wyosine derivatives biosynthesis pathway. Probably methylates N-4 position of wybutosine-86 to produce wybutosine-72. This is tRNA(Phe) 7-((3-amino-3-carboxypropyl)-4-demethylwyosine(37)-N(4))-methyltransferase 1 from Pyrococcus horikoshii (strain ATCC 700860 / DSM 12428 / JCM 9974 / NBRC 100139 / OT-3).